A 420-amino-acid polypeptide reads, in one-letter code: FLYWCH transcription factor 3 (420 aa).

The span at 87-104 shows a compositional bias: low complexity; that stretch reads SSTSPDSQPSSSSSVMSS. 2 disordered regions span residues 87-107 and 119-138; these read SSTSPDSQPSSSSSVMSSTDE and KINKAQRQSSPNSSKPYTPR. A compositionally biased stretch (polar residues) spans 123-134; sequence AQRQSSPNSSKP. The FLYWCH-type zinc finger occupies 140 to 195; that stretch reads IRERVLFDEHLYVFDKCSYDSKKRFFRCERKNTCPARIHTPFDAERVIHKVQVHNH.

In terms of biological role, probable transcription factor. May bind to the promoters of target genes, including micro-RNA genes, in order to repress expression, and acting redundantly with flh-2. The chain is FLYWCH transcription factor 3 from Caenorhabditis elegans.